The following is a 694-amino-acid chain: Katanin p80 WD40 repeat-containing subunit B1 (694 aa).

WD repeat units follow at residues 18-58 (AHSS…CIMS), 61-100 (GHTSAVGCIQFNSSEERVVAGSLSGSLRLWDLEAAKILRT), 103-142 (GHKASISSLDFHPMGEYLASGSVDSNIKLWDVRRKGCVFR), 145-186 (GHTQ…TEFT), 188-226 (HTSAVNVVQFHPNEYLLASGSADRTVKLWDLEKFNMIGS), and 229-269 (GETG…DVVH). Disordered regions lie at residues 319–410 (KPIP…PFPA) and 470–492 (TTSASSPSRPVVNTTKPKPSTGI). Polar residues predominate over residues 327-349 (ALGTTLRRNYERPTTSCTGQEMK). The segment covering 350–378 (QSSEADRRSPEGERRSPSSEDEKEDKESS) has biased composition (basic and acidic residues). Low complexity predominate over residues 470–481 (TTSASSPSRPVV). Polar residues predominate over residues 482 to 492 (NTTKPKPSTGI).

Belongs to the WD repeat KATNB1 family. As to quaternary structure, interacts with katna1. This interaction enhances the microtubule binding and severing activity of katna1 and also targets this activity to the centrosome.

Its subcellular location is the cytoplasm. It localises to the cytoskeleton. The protein resides in the microtubule organizing center. The protein localises to the centrosome. It is found in the spindle pole. Its subcellular location is the spindle. Participates in a complex which severs microtubules in an ATP-dependent manner. May act to target the enzymatic subunit of this complex to sites of action such as the centrosome. Microtubule severing may promote rapid reorganization of cellular microtubule arrays and the release of microtubules from the centrosome following nucleation. In Danio rerio (Zebrafish), this protein is Katanin p80 WD40 repeat-containing subunit B1 (katnb1).